A 205-amino-acid chain; its full sequence is LIM domain-containing protein PLIM2b (205 aa).

2 consecutive LIM zinc-binding domains span residues aspartate 8–glutamate 68 and aspartate 102–glutamate 162. The segment at arginine 177 to serine 205 is disordered. Residues valine 194 to serine 205 show a composition bias toward basic and acidic residues.

In terms of assembly, interacts with F-actin. Predominantly expressed in flowers and in pollen grains. Detected in vasculature and roots.

Its subcellular location is the cytoplasm. The protein resides in the cytoskeleton. Functionally, binds to actin filaments and promotes cross-linking into thick bundles. Has an actin-stabilizing activity. The actin regulatory activities are inhibited by pH &gt; 6.8 but are [Ca(2+)] independent. This chain is LIM domain-containing protein PLIM2b, found in Arabidopsis thaliana (Mouse-ear cress).